The chain runs to 287 residues: Cell division protein ZipA (287 aa).

A topological domain (periplasmic) is located at residue M1. The chain crosses the membrane as a helical span at residues 2–22 (EIGLREWLIVIGIIVIAGILF). Topologically, residues 23 to 287 (DGWRRMRGGK…FERRALTQKR (265 aa)) are cytoplasmic. A disordered region spans residues 70–143 (LDEHDLPSMS…APRQSVNDQP (74 aa)).

Belongs to the ZipA family. As to quaternary structure, interacts with FtsZ via their C-terminal domains.

It is found in the cell inner membrane. Essential cell division protein that stabilizes the FtsZ protofilaments by cross-linking them and that serves as a cytoplasmic membrane anchor for the Z ring. Also required for the recruitment to the septal ring of downstream cell division proteins. The protein is Cell division protein ZipA of Pseudomonas fluorescens (strain SBW25).